The chain runs to 483 residues: MORN repeat-containing protein 1 (483 aa).

Position 18 is a phosphoserine (serine 18). MORN repeat units lie at residues 39 to 61 (YEGE…DGSY), 62 to 84 (YEGE…WSGN), 86 to 108 (YSGQ…AGGH), 109 to 131 (YEGE…DGQV), 132 to 154 (YQGS…NGDK), 155 to 177 (YEGD…DGST), and 178 to 200 (YKGQ…SGVT). The segment at 392–427 (EKAGNRPKGDRSPPEVLSTAQEPLRGTNRSDGTTAE) is disordered. The segment covering 394–404 (AGNRPKGDRSP) has biased composition (basic and acidic residues). A Phosphoserine modification is found at serine 403. Over residues 418–427 (TNRSDGTTAE) the composition is skewed to polar residues.

This Rattus norvegicus (Rat) protein is MORN repeat-containing protein 1 (Morn1).